The sequence spans 212 residues: MARIVIVDYGMGNLASVRNALRAVGFEAAVSDDPAAVAGADGLVLPGVGAFGTGMQNLARRGLDQAVRQAAAAGRPVLGICLGMQLLLAEGDEGGPRPGLGLLEGRVARLPDGLPLPQIGWNLVEPQRDHPLFAGLPTPFWAYFDHAYAVEGEPPSTALALTDYGRTYPSVVGRGNLLGIQFHPEKSSRAGLRMLANWGRMVCDLISTRPST.

In terms of domain architecture, Glutamine amidotransferase type-1 spans 3-208 (RIVIVDYGMG…GRMVCDLIST (206 aa)). Cys-81 functions as the Nucleophile in the catalytic mechanism. Catalysis depends on residues His-183 and Glu-185.

In terms of assembly, heterodimer of HisH and HisF.

Its subcellular location is the cytoplasm. The enzyme catalyses 5-[(5-phospho-1-deoxy-D-ribulos-1-ylimino)methylamino]-1-(5-phospho-beta-D-ribosyl)imidazole-4-carboxamide + L-glutamine = D-erythro-1-(imidazol-4-yl)glycerol 3-phosphate + 5-amino-1-(5-phospho-beta-D-ribosyl)imidazole-4-carboxamide + L-glutamate + H(+). It carries out the reaction L-glutamine + H2O = L-glutamate + NH4(+). It participates in amino-acid biosynthesis; L-histidine biosynthesis; L-histidine from 5-phospho-alpha-D-ribose 1-diphosphate: step 5/9. IGPS catalyzes the conversion of PRFAR and glutamine to IGP, AICAR and glutamate. The HisH subunit catalyzes the hydrolysis of glutamine to glutamate and ammonia as part of the synthesis of IGP and AICAR. The resulting ammonia molecule is channeled to the active site of HisF. This is Imidazole glycerol phosphate synthase subunit HisH from Symbiobacterium thermophilum (strain DSM 24528 / JCM 14929 / IAM 14863 / T).